A 193-amino-acid chain; its full sequence is Peptidyl-tRNA hydrolase (193 aa).

Tyr16 contributes to the tRNA binding site. The active-site Proton acceptor is the His21. TRNA-binding residues include Phe67, Asn69, and Asn115.

Belongs to the PTH family. As to quaternary structure, monomer.

It is found in the cytoplasm. The catalysed reaction is an N-acyl-L-alpha-aminoacyl-tRNA + H2O = an N-acyl-L-amino acid + a tRNA + H(+). In terms of biological role, hydrolyzes ribosome-free peptidyl-tRNAs (with 1 or more amino acids incorporated), which drop off the ribosome during protein synthesis, or as a result of ribosome stalling. Its function is as follows. Catalyzes the release of premature peptidyl moieties from peptidyl-tRNA molecules trapped in stalled 50S ribosomal subunits, and thus maintains levels of free tRNAs and 50S ribosomes. The sequence is that of Peptidyl-tRNA hydrolase from Baumannia cicadellinicola subsp. Homalodisca coagulata.